We begin with the raw amino-acid sequence, 231 residues long: MLKRFFITGTDTSVGKTVVSRALLQALSSGGKSVAGYKPVAKGSKETPEGMRNKDALVLQSVSSLELPYEAINPIALSEEESSVAHSCPINYTLLSNGLASLSDKVDHVVVEGTGGWRSLMNDLRPLSEWVVQEQLPVLMVVGIQEGCINHALLTAQAVANDGLPLIGWVANRINPGLAHYAEIIDVLGKKLPAPLIGELPYLPRAEQRELGQYIRLSMLGSVLAVDRIMA.

Residue 13-18 participates in ATP binding; that stretch reads SVGKTV. T17 contacts Mg(2+). K38 is an active-site residue. ATP-binding positions include D55, 112–115, 172–173, 201–203, and Q208; these read EGTG, NR, and PYL. 2 residues coordinate Mg(2+): D55 and E112.

The protein belongs to the dethiobiotin synthetase family. In terms of assembly, homodimer. Mg(2+) is required as a cofactor.

The protein localises to the cytoplasm. It carries out the reaction (7R,8S)-7,8-diammoniononanoate + CO2 + ATP = (4R,5S)-dethiobiotin + ADP + phosphate + 3 H(+). Its pathway is cofactor biosynthesis; biotin biosynthesis; biotin from 7,8-diaminononanoate: step 1/2. Its function is as follows. Catalyzes a mechanistically unusual reaction, the ATP-dependent insertion of CO2 between the N7 and N8 nitrogen atoms of 7,8-diaminopelargonic acid (DAPA, also called 7,8-diammoniononanoate) to form a ureido ring. The sequence is that of ATP-dependent dethiobiotin synthetase BioD 2 from Salmonella typhi.